We begin with the raw amino-acid sequence, 686 residues long: ATP-dependent zinc metalloprotease FtsH 2 (686 aa).

Over 1 to 11 (MKKNIKDIFKN) the chain is Cytoplasmic. The helical transmembrane segment at 12–32 (FNIFWFCFIFLLLSLLYCLIM) threads the bilayer. Residues 33–178 (MEISHQHDNN…LQRIPYQPYF (146 aa)) are Extracellular-facing. Residues 179–199 (GFAPFISAVNICILIIIFYFI) traverse the membrane as a helical segment. The Cytoplasmic segment spans residues 200 to 686 (YNSIEKTSAQ…QKSEKEDCNK (487 aa)). 272–279 (GPPGVGKT) is an ATP binding site. His493 serves as a coordination point for Zn(2+). Glu494 is an active-site residue. Positions 497 and 569 each coordinate Zn(2+).

In the central section; belongs to the AAA ATPase family. This sequence in the C-terminal section; belongs to the peptidase M41 family. As to quaternary structure, homohexamer. Zn(2+) is required as a cofactor.

It localises to the cell membrane. In terms of biological role, acts as a processive, ATP-dependent zinc metallopeptidase for both cytoplasmic and membrane proteins. Plays a role in the quality control of integral membrane proteins. In Phytoplasma mali (strain AT), this protein is ATP-dependent zinc metalloprotease FtsH 2.